Consider the following 355-residue polypeptide: UPF0421 protein BALH_2468 (355 aa).

The next 4 helical transmembrane spans lie at 19 to 39, 74 to 94, 109 to 129, and 131 to 151; these read IAVF…IFAV, FTFF…FTIV, TLTA…AFLI, and LATT…ILPP.

Belongs to the UPF0421 family.

Its subcellular location is the cell membrane. The polypeptide is UPF0421 protein BALH_2468 (Bacillus thuringiensis (strain Al Hakam)).